The following is a 209-amino-acid chain: Large ribosomal subunit protein uL4 (209 aa).

The segment at 46 to 72 (GTSSTKTRSEVRGSSKKPWKQKGTGRA) is disordered. Over residues 59-72 (SSKKPWKQKGTGRA) the composition is skewed to basic residues.

This sequence belongs to the universal ribosomal protein uL4 family. In terms of assembly, part of the 50S ribosomal subunit.

Its function is as follows. One of the primary rRNA binding proteins, this protein initially binds near the 5'-end of the 23S rRNA. It is important during the early stages of 50S assembly. It makes multiple contacts with different domains of the 23S rRNA in the assembled 50S subunit and ribosome. Forms part of the polypeptide exit tunnel. The polypeptide is Large ribosomal subunit protein uL4 (Borreliella burgdorferi (strain ATCC 35210 / DSM 4680 / CIP 102532 / B31) (Borrelia burgdorferi)).